The following is an 84-amino-acid chain: U4-theraphotoxin-Hhn1a (84 aa).

The first 22 residues, 1–22 (MKVTLIAILTRAAVLVLHTTAA), serve as a signal peptide directing secretion. Positions 23 to 47 (EELEESQLMEVSMPDTELAAVDEER) are excised as a propeptide. Disulfide bonds link Cys51-Cys65, Cys55-Cys76, and Cys70-Cys81.

Belongs to the neurotoxin 12 (Hwtx-2) family. 02 (Hwtx-2) subfamily. As to expression, expressed by the venom gland.

Its subcellular location is the secreted. Postsynaptic neurotoxin. The sequence is that of U4-theraphotoxin-Hhn1a from Cyriopagopus hainanus (Chinese bird spider).